The chain runs to 227 residues: Ribosomal RNA small subunit methyltransferase G (227 aa).

S-adenosyl-L-methionine-binding positions include Gly69, Phe74, 119-120 (VE), and Arg134.

It belongs to the methyltransferase superfamily. RNA methyltransferase RsmG family.

Its subcellular location is the cytoplasm. Its function is as follows. Specifically methylates the N7 position of a guanine in 16S rRNA. This chain is Ribosomal RNA small subunit methyltransferase G, found in Mycoplasmopsis pulmonis (strain UAB CTIP) (Mycoplasma pulmonis).